Consider the following 357-residue polypeptide: Metacaspase-3 (357 aa).

Residue H168 is part of the active site. Ca(2+) is bound by residues D183, D199, and D200. The active site involves C223. D230 contributes to the Ca(2+) binding site.

This sequence belongs to the peptidase C14B family.

Its subcellular location is the recycling endosome. Its activity is regulated as follows. Activated by Ca(2+). Its function is as follows. Cysteine protease that cleaves specifically after arginine or lysine residues. In the bloodstream form, may cleave inactive metacaspase-4 MCA4 prior to MCA4 secretion. The polypeptide is Metacaspase-3 (Trypanosoma brucei brucei).